Here is a 775-residue protein sequence, read N- to C-terminus: Phosphoribosylformylglycinamidine synthase subunit PurL (775 aa).

Residue H81 is part of the active site. 2 residues coordinate ATP: Y84 and K123. E125 lines the Mg(2+) pocket. Substrate contacts are provided by residues 126–129 and R148; that span reads SHNH. Catalysis depends on H127, which acts as the Proton acceptor. Residue D149 coordinates Mg(2+). Q272 contacts substrate. D300 contacts Mg(2+). 344–346 contributes to the substrate binding site; that stretch reads ESQ. ATP contacts are provided by D525 and G562. N563 provides a ligand contact to Mg(2+). Residue S565 coordinates substrate.

The protein belongs to the FGAMS family. Monomer. Part of the FGAM synthase complex composed of 1 PurL, 1 PurQ and 2 PurS subunits.

It localises to the cytoplasm. It carries out the reaction N(2)-formyl-N(1)-(5-phospho-beta-D-ribosyl)glycinamide + L-glutamine + ATP + H2O = 2-formamido-N(1)-(5-O-phospho-beta-D-ribosyl)acetamidine + L-glutamate + ADP + phosphate + H(+). Its pathway is purine metabolism; IMP biosynthesis via de novo pathway; 5-amino-1-(5-phospho-D-ribosyl)imidazole from N(2)-formyl-N(1)-(5-phospho-D-ribosyl)glycinamide: step 1/2. Functionally, part of the phosphoribosylformylglycinamidine synthase complex involved in the purines biosynthetic pathway. Catalyzes the ATP-dependent conversion of formylglycinamide ribonucleotide (FGAR) and glutamine to yield formylglycinamidine ribonucleotide (FGAM) and glutamate. The FGAM synthase complex is composed of three subunits. PurQ produces an ammonia molecule by converting glutamine to glutamate. PurL transfers the ammonia molecule to FGAR to form FGAM in an ATP-dependent manner. PurS interacts with PurQ and PurL and is thought to assist in the transfer of the ammonia molecule from PurQ to PurL. The protein is Phosphoribosylformylglycinamidine synthase subunit PurL of Agrobacterium fabrum (strain C58 / ATCC 33970) (Agrobacterium tumefaciens (strain C58)).